Reading from the N-terminus, the 41-residue chain is Large ribosomal subunit protein bL36B (41 aa).

It belongs to the bacterial ribosomal protein bL36 family.

The protein is Large ribosomal subunit protein bL36B of Neisseria meningitidis serogroup B (strain ATCC BAA-335 / MC58).